We begin with the raw amino-acid sequence, 115 residues long: Ribonuclease P protein component (115 aa).

It belongs to the RnpA family. As to quaternary structure, consists of a catalytic RNA component (M1 or rnpB) and a protein subunit.

The catalysed reaction is Endonucleolytic cleavage of RNA, removing 5'-extranucleotides from tRNA precursor.. Its function is as follows. RNaseP catalyzes the removal of the 5'-leader sequence from pre-tRNA to produce the mature 5'-terminus. It can also cleave other RNA substrates such as 4.5S RNA. The protein component plays an auxiliary but essential role in vivo by binding to the 5'-leader sequence and broadening the substrate specificity of the ribozyme. The sequence is that of Ribonuclease P protein component from Staphylococcus aureus (strain Mu3 / ATCC 700698).